The following is a 383-amino-acid chain: 4-hydroxy-3-methylbut-2-en-1-yl diphosphate synthase (flavodoxin) (383 aa).

[4Fe-4S] cluster contacts are provided by C275, C278, C310, and E317.

The protein belongs to the IspG family. Requires [4Fe-4S] cluster as cofactor.

It catalyses the reaction (2E)-4-hydroxy-3-methylbut-2-enyl diphosphate + oxidized [flavodoxin] + H2O + 2 H(+) = 2-C-methyl-D-erythritol 2,4-cyclic diphosphate + reduced [flavodoxin]. The protein operates within isoprenoid biosynthesis; isopentenyl diphosphate biosynthesis via DXP pathway; isopentenyl diphosphate from 1-deoxy-D-xylulose 5-phosphate: step 5/6. Converts 2C-methyl-D-erythritol 2,4-cyclodiphosphate (ME-2,4cPP) into 1-hydroxy-2-methyl-2-(E)-butenyl 4-diphosphate. In Dinoroseobacter shibae (strain DSM 16493 / NCIMB 14021 / DFL 12), this protein is 4-hydroxy-3-methylbut-2-en-1-yl diphosphate synthase (flavodoxin).